The primary structure comprises 452 residues: Scaffold protein ILK (452 aa).

5 ANK repeats span residues 2-30 (DDIF…LNQG), 31-63 (DDHG…INVM), 64-96 (NRGD…INAV), 97-129 (NEHG…VSIA), and 130-174 (NKYS…GTTR). A Protein kinase domain is found at 193-446 (LSLSQKLNEN…PKFDMIVPIL (254 aa)). 6 residues coordinate ATP: Asn200, Asn202, Ser204, His270, Met272, and Asn279. Asp339 contributes to the Mg(2+) binding site. Lys341 serves as a coordination point for ATP. The Nuclear localization signal signature appears at 363 to 371 (KKPEEINRR).

This sequence belongs to the protein kinase superfamily. TKL Ser/Thr protein kinase family. As to quaternary structure, interacts with PXN/PAXILLIN (via LD motif 4).

The protein resides in the cell junction. It is found in the focal adhesion. The protein localises to the cell membrane. Its subcellular location is the cell projection. It localises to the lamellipodium. The protein resides in the cytoplasm. It is found in the myofibril. The protein localises to the sarcomere. Its subcellular location is the nucleus. It localises to the cytoskeleton. The protein resides in the microtubule organizing center. It is found in the centrosome. The protein localises to the cell cortex. Scaffold protein which mediates protein-protein interactions during a range of cellular events including focal adhesion assembly, cell adhesion and cell migration. The sequence is that of Scaffold protein ILK from Gallus gallus (Chicken).